The primary structure comprises 138 residues: Basic phospholipase A2 PL-Y (138 aa).

The signal sequence occupies residues 1–16 (MRTLWIMAVLLVGVEG). Disulfide bonds link cysteine 42/cysteine 131, cysteine 44/cysteine 60, cysteine 59/cysteine 111, cysteine 65/cysteine 138, cysteine 66/cysteine 104, cysteine 73/cysteine 97, and cysteine 91/cysteine 102. Ca(2+) contacts are provided by tyrosine 43, glycine 45, and glycine 47. Histidine 63 is a catalytic residue. Aspartate 64 lines the Ca(2+) pocket. Aspartate 105 is a catalytic residue.

The protein belongs to the phospholipase A2 family. Group II subfamily. D49 sub-subfamily. Ca(2+) is required as a cofactor. As to expression, expressed by the venom gland.

It is found in the secreted. The enzyme catalyses a 1,2-diacyl-sn-glycero-3-phosphocholine + H2O = a 1-acyl-sn-glycero-3-phosphocholine + a fatty acid + H(+). Functionally, snake venom phospholipase A2 (PLA2) that can cleave arachidonate at the sn-2 position from phospholipides in the micellar state or in bilayer membranes. PLA2 catalyzes the calcium-dependent hydrolysis of the 2-acyl groups in 3-sn-phosphoglycerides. The chain is Basic phospholipase A2 PL-Y from Protobothrops flavoviridis (Habu).